The primary structure comprises 330 residues: Beta-hexosaminidase (330 aa).

Residues Asp62, Arg70, Arg130, and 160–161 (KH) each bind substrate. His173 (proton donor/acceptor) is an active-site residue. The Nucleophile role is filled by Asp242.

This sequence belongs to the glycosyl hydrolase 3 family. NagZ subfamily. In terms of assembly, monomer.

Its subcellular location is the cytoplasm. It catalyses the reaction Hydrolysis of terminal non-reducing N-acetyl-D-hexosamine residues in N-acetyl-beta-D-hexosaminides.. Its pathway is cell wall biogenesis; peptidoglycan recycling. Plays a role in peptidoglycan recycling by cleaving the terminal beta-1,4-linked N-acetylglucosamine (GlcNAc) from peptide-linked peptidoglycan fragments, giving rise to free GlcNAc, anhydro-N-acetylmuramic acid and anhydro-N-acetylmuramic acid-linked peptides. Plays a role in beta-lactam antibiotic resistance via its role in generating anhydro-N-acetylmuramic acid-linked peptides; these peptides function as signaling molecules that induce high-level expression of the beta-lactamase AmpC. This is Beta-hexosaminidase from Vibrio cholerae serotype O1 (strain ATCC 39315 / El Tor Inaba N16961).